Reading from the N-terminus, the 261-residue chain is Acyl-[acyl-carrier-protein]--UDP-N-acetylglucosamine O-acyltransferase (261 aa).

This sequence belongs to the transferase hexapeptide repeat family. LpxA subfamily. In terms of assembly, homotrimer.

The protein resides in the cytoplasm. It catalyses the reaction a (3R)-hydroxyacyl-[ACP] + UDP-N-acetyl-alpha-D-glucosamine = a UDP-3-O-[(3R)-3-hydroxyacyl]-N-acetyl-alpha-D-glucosamine + holo-[ACP]. Its pathway is glycolipid biosynthesis; lipid IV(A) biosynthesis; lipid IV(A) from (3R)-3-hydroxytetradecanoyl-[acyl-carrier-protein] and UDP-N-acetyl-alpha-D-glucosamine: step 1/6. In terms of biological role, involved in the biosynthesis of lipid A, a phosphorylated glycolipid that anchors the lipopolysaccharide to the outer membrane of the cell. The protein is Acyl-[acyl-carrier-protein]--UDP-N-acetylglucosamine O-acyltransferase of Aquifex aeolicus (strain VF5).